Reading from the N-terminus, the 209-residue chain is Guanylyl cyclase-activating protein 3 (209 aa).

A lipid anchor (N-myristoyl glycine) is attached at Gly-2. Deamidated asparagine is present on Asn-3. EF-hand domains are found at residues 15–50 (PTQE…QGLN), 52–87 (KANK…IMQE), 88–123 (KMEQ…VQAL), and 130–165 (SPEE…DQDL). Ca(2+) contacts are provided by Asp-65, Asn-67, Asp-69, Glu-76, Asp-101, Asp-103, Asn-105, Ser-107, Glu-112, Asp-143, Asn-145, Asp-147, Glu-149, and Glu-154. Positions 187–209 (QPDMETDSSKSPDKAGLGKVKMK) are disordered.

In terms of tissue distribution, retina.

Its function is as follows. Stimulates guanylyl cyclase 1 (GC1) and GC2 when free calcium ions concentration is low and inhibits guanylyl cyclases when free calcium ions concentration is elevated. This Ca(2+)-sensitive regulation of guanylyl cyclase (GC) is a key event in recovery of the dark state of rod photoreceptors following light exposure. This is Guanylyl cyclase-activating protein 3 (GUCA1C) from Homo sapiens (Human).